We begin with the raw amino-acid sequence, 342 residues long: Serpentine receptor class beta-16 (342 aa).

Residues 1–22 (MDRELIEICKENSATAFSVGYQ) lie on the Extracellular side of the membrane. The helical transmembrane segment at 23–43 (IVYLIYVVLSVTSIFTCSYFI) threads the bilayer. Residues 44–61 (KTFIWNSTFHPNFKLLLT) lie on the Cytoplasmic side of the membrane. The helical transmembrane segment at 62–82 (MYFFAAIFHSFLFTASYLMMI) threads the bilayer. At 83–102 (ERFLDYQTDCDIHVSMVPYA) the chain is on the extracellular side. A helical transmembrane segment spans residues 103–123 (IVHSSIACCLFCGMLTQVFMV). Residues 124–141 (IERLLATIKIESYEHNTS) are Cytoplasmic-facing. A helical transmembrane segment spans residues 142-162 (FWHILAYLFFCIVLPLSLLVW). Residues 163–187 (AYQDADYNSPVITAISPPKGVEIRL) lie on the Extracellular side of the membrane. The chain crosses the membrane as a helical span at residues 188-208 (NILYIFCFFLAILALILLQVV). At 209–237 (RFVNKRRESRIEISLSGRFQIVENIDTTT) the chain is on the cytoplasmic side. A helical transmembrane segment spans residues 238–258 (FISSILIINMIMSVIYIVGTF). Residues 259–274 (TLRNFQFDAFINNQPA) lie on the Extracellular side of the membrane. A helical transmembrane segment spans residues 275 to 295 (LATVKTIFYLHPLFSFLMPLI). The Cytoplasmic segment spans residues 296–342 (SSYHLSKMRERRVKRREHLMAIKTKGREGSDAYNQLLHDQWTQHFLK).

This sequence belongs to the nematode receptor-like protein srb family. Expressed throughout the nervous system, in pharyngeal muscle, hermaphrodite vulval muscles and in the male tail. Not expressed in male somatic gonads or sperm.

The protein localises to the cell membrane. It localises to the perikaryon. It is found in the cell projection. Its subcellular location is the dendrite. Its function is as follows. G-protein coupled receptor. Plays a role in the navigational capacity of sperm and promotes the targeting of sperm derived from males to the fertilization site in the uterus of hermaphrodites. The chain is Serpentine receptor class beta-16 from Caenorhabditis elegans.